Consider the following 590-residue polypeptide: Sperm-associated microtubule inner protein 4 (590 aa).

T219 carries the phosphothreonine modification. Residues S407 and S422 each carry the phosphoserine modification. Residue K427 forms a Glycyl lysine isopeptide (Lys-Gly) (interchain with G-Cter in SUMO2) linkage. Phosphotyrosine is present on Y442. The residue at position 485 (S485) is a Phosphoserine. A Glycyl lysine isopeptide (Lys-Gly) (interchain with G-Cter in SUMO2) cross-link involves residue K545. Position 547 is a phosphoserine (S547).

In terms of tissue distribution, predominantly expressed in the testes.

The protein localises to the cytoplasm. It is found in the cytoskeleton. It localises to the microtubule organizing center. Its subcellular location is the centrosome. The protein resides in the flagellum axoneme. Microtubule inner protein (MIP) part of the dynein-decorated doublet microtubules (DMTs) in flagellum axoneme. May serve to reinforce and thus stabilize the microtubule structure in the sperm flagella. The chain is Sperm-associated microtubule inner protein 4 from Homo sapiens (Human).